The following is a 264-amino-acid chain: S-adenosylmethionine decarboxylase proenzyme (264 aa).

S113 functions as the Schiff-base intermediate with substrate; via pyruvic acid in the catalytic mechanism. S113 carries the pyruvic acid (Ser); by autocatalysis modification. H118 acts as the Proton acceptor; for processing activity in catalysis. Residue C141 is the Proton donor; for catalytic activity of the active site.

It belongs to the prokaryotic AdoMetDC family. Type 2 subfamily. In terms of assembly, heterooctamer of four alpha and four beta chains arranged as a tetramer of alpha/beta heterodimers. It depends on pyruvate as a cofactor. In terms of processing, is synthesized initially as an inactive proenzyme. Formation of the active enzyme involves a self-maturation process in which the active site pyruvoyl group is generated from an internal serine residue via an autocatalytic post-translational modification. Two non-identical subunits are generated from the proenzyme in this reaction, and the pyruvate is formed at the N-terminus of the alpha chain, which is derived from the carboxyl end of the proenzyme. The post-translation cleavage follows an unusual pathway, termed non-hydrolytic serinolysis, in which the side chain hydroxyl group of the serine supplies its oxygen atom to form the C-terminus of the beta chain, while the remainder of the serine residue undergoes an oxidative deamination to produce ammonia and the pyruvoyl group blocking the N-terminus of the alpha chain.

The enzyme catalyses S-adenosyl-L-methionine + H(+) = S-adenosyl 3-(methylsulfanyl)propylamine + CO2. It participates in amine and polyamine biosynthesis; S-adenosylmethioninamine biosynthesis; S-adenosylmethioninamine from S-adenosyl-L-methionine: step 1/1. In terms of biological role, catalyzes the decarboxylation of S-adenosylmethionine to S-adenosylmethioninamine (dcAdoMet), the propylamine donor required for the synthesis of the polyamines spermine and spermidine from the diamine putrescine. This is S-adenosylmethionine decarboxylase proenzyme from Stenotrophomonas maltophilia (strain K279a).